The following is a 264-amino-acid chain: [LysW]-aminoadipate/[LysW]-glutamate kinase (264 aa).

Substrate is bound by residues 35-36, R62, and N167; that span reads GG.

The protein belongs to the acetylglutamate kinase family. LysZ subfamily.

The protein localises to the cytoplasm. It catalyses the reaction [amino-group carrier protein]-C-terminal-N-(1,4-dicarboxybutan-1-yl)-L-glutamine + ATP = [amino-group carrier protein]-C-terminal-N-(1-carboxy-5-phosphooxy-5-oxopentan-1-yl)-L-glutamine + ADP. It carries out the reaction [amino-group carrier protein]-C-terminal-gamma-(L-glutamyl)-L-glutamate + ATP = [amino-group carrier protein]-C-terminal-gamma-(5-phospho-L-glutamyl)-L-glutamate + ADP. Its pathway is amino-acid biosynthesis; L-lysine biosynthesis via AAA pathway; L-lysine from L-alpha-aminoadipate (Thermus route): step 2/5. It participates in amino-acid biosynthesis; L-arginine biosynthesis. Functionally, involved in both the arginine and lysine biosynthetic pathways. Phosphorylates the LysW-bound precursors glutamate (for arginine biosynthesis), respectively alpha-aminoadipate (for lysine biosynthesis). This chain is [LysW]-aminoadipate/[LysW]-glutamate kinase, found in Saccharolobus islandicus (strain L.S.2.15 / Lassen #1) (Sulfolobus islandicus).